The chain runs to 165 residues: Cyclic pyranopterin monophosphate synthase (165 aa).

Substrate contacts are provided by residues 76–78 (LCH) and 119–120 (ME). Asp134 is an active-site residue.

It belongs to the MoaC family. As to quaternary structure, homohexamer; trimer of dimers.

The enzyme catalyses (8S)-3',8-cyclo-7,8-dihydroguanosine 5'-triphosphate = cyclic pyranopterin phosphate + diphosphate. It participates in cofactor biosynthesis; molybdopterin biosynthesis. Catalyzes the conversion of (8S)-3',8-cyclo-7,8-dihydroguanosine 5'-triphosphate to cyclic pyranopterin monophosphate (cPMP). The sequence is that of Cyclic pyranopterin monophosphate synthase from Photobacterium profundum (strain SS9).